Reading from the N-terminus, the 335-residue chain is MKKNVSLTRYLVEQQRVDGLIPGQLRLLLEVVARACKRISQSVNKGAIGDVLGTAGSENVQGEVQKKLDIIANEVLIEANEWGGHLAAMASEEMEGIYLVPNRYPHGEYLLMFDPLDGSSNIDVNVSIGTIFSVLKKPEGHPGVTEQDFMQPGTQQVAAGYCIYGPQTTLVLTVGDGVSMFTLDREQGSFVLVQENIRIPEDTKEFAINMSNMRHWDTPVKRYVDECLAGVEGPRGKDFNMRWIASMVADVHRIMTRGGIFMYPWDRREPNKPGKLRLMYEANPMAWLVEQAGGAATNGKQRILDIQPTQLHERVSVILGSKNEVEKVTQYHSEA.

Positions 92, 114, 116, and 117 each coordinate Mg(2+). Residues 117 to 120 (DGSS), asparagine 209, and lysine 275 each bind substrate. Residue glutamate 281 participates in Mg(2+) binding.

The protein belongs to the FBPase class 1 family. In terms of assembly, homotetramer. The cofactor is Mg(2+).

The protein localises to the cytoplasm. The catalysed reaction is beta-D-fructose 1,6-bisphosphate + H2O = beta-D-fructose 6-phosphate + phosphate. It functions in the pathway carbohydrate biosynthesis; gluconeogenesis. In Delftia acidovorans (strain DSM 14801 / SPH-1), this protein is Fructose-1,6-bisphosphatase class 1.